The chain runs to 41 residues: Fibrinogen beta chain (41 aa).

Positions 1-41 are disordered; sequence ADDYDDEVLPDARGHRPIDRKREELPSLRPAPPPISGGGYR. Residue Tyr4 is modified to Sulfotyrosine. Residues 10–26 are compositionally biased toward basic and acidic residues; the sequence is PDARGHRPIDRKREELP. A beta-chain polymerization, binding distal domain of another fibrin region spans residues 14–16; that stretch reads GHR.

Heterohexamer; disulfide linked. Contains 2 sets of 3 non-identical chains (alpha, beta and gamma). The 2 heterotrimers are in head to head conformation with the N-termini in a small central domain. In terms of processing, conversion of fibrinogen to fibrin is triggered by thrombin, which cleaves fibrinopeptides A and B from alpha and beta chains, and thus exposes the N-terminal polymerization sites responsible for the formation of the soft clot.

The protein resides in the secreted. Cleaved by the protease thrombin to yield monomers which, together with fibrinogen alpha (FGA) and fibrinogen gamma (FGG), polymerize to form an insoluble fibrin matrix. Fibrin has a major function in hemostasis as one of the primary components of blood clots. In addition, functions during the early stages of wound repair to stabilize the lesion and guide cell migration during re-epithelialization. Was originally thought to be essential for platelet aggregation, based on in vitro studies using anticoagulated blood. However subsequent studies have shown that it is not absolutely required for thrombus formation in vivo. Enhances expression of SELP in activated platelets. Maternal fibrinogen is essential for successful pregnancy. Fibrin deposition is also associated with infection, where it protects against IFNG-mediated hemorrhage. May also facilitate the antibacterial immune response via both innate and T-cell mediated pathways. This is Fibrinogen beta chain (FGB) from Oryctolagus cuniculus (Rabbit).